We begin with the raw amino-acid sequence, 460 residues long: ATP synthase subunit beta (460 aa).

ATP is bound at residue Gly-149–Thr-156.

Belongs to the ATPase alpha/beta chains family. F-type ATPases have 2 components, CF(1) - the catalytic core - and CF(0) - the membrane proton channel. CF(1) has five subunits: alpha(3), beta(3), gamma(1), delta(1), epsilon(1). CF(0) has three main subunits: a(1), b(2) and c(9-12). The alpha and beta chains form an alternating ring which encloses part of the gamma chain. CF(1) is attached to CF(0) by a central stalk formed by the gamma and epsilon chains, while a peripheral stalk is formed by the delta and b chains.

It localises to the cell inner membrane. It carries out the reaction ATP + H2O + 4 H(+)(in) = ADP + phosphate + 5 H(+)(out). Its function is as follows. Produces ATP from ADP in the presence of a proton gradient across the membrane. The catalytic sites are hosted primarily by the beta subunits. This Nitrosomonas europaea (strain ATCC 19718 / CIP 103999 / KCTC 2705 / NBRC 14298) protein is ATP synthase subunit beta.